Consider the following 70-residue polypeptide: Large ribosomal subunit protein bL28 (70 aa).

Positions 1–26 (MAKRCEVCGKAPRSGNTVSHSDKKSG) are disordered.

This sequence belongs to the bacterial ribosomal protein bL28 family.

In Thermotoga maritima (strain ATCC 43589 / DSM 3109 / JCM 10099 / NBRC 100826 / MSB8), this protein is Large ribosomal subunit protein bL28 (rpmB).